A 3165-amino-acid chain; its full sequence is Protein eyes shut homolog (3165 aa).

An N-terminal signal peptide occupies residues 1–21; sequence MTDKSIIILSLMVFHSSFING. 4 N-linked (GlcNAc...) asparagine glycosylation sites follow: Asn-42, Asn-105, Asn-117, and Asn-166. 3 EGF-like domains span residues 170 to 212, 213 to 254, and 256 to 292; these read KQQF…KYCQ, ELDA…KNCS, and IIVQCQPHVCFHGNCSNITSNSFICECDEQFSGPFCE. 9 disulfide bridges follow: Cys-174–Cys-189, Cys-183–Cys-200, Cys-202–Cys-211, Cys-217–Cys-228, Cys-222–Cys-242, Cys-244–Cys-253, Cys-260–Cys-270, Cys-265–Cys-280, and Cys-282–Cys-291. N-linked (GlcNAc...) asparagine glycans are attached at residues Asn-252, Asn-269, and Asn-272. Asn-311 and Asn-343 each carry an N-linked (GlcNAc...) asparagine glycan. EGF-like domains lie at 332–368 and 370–406; these read DVSECSLILCENGTDGIKISNDVMCICSPIFTDLLCK and FQTSCESFPLKNNATFKKCEKDYHCSCMSGFTGKNCE. 2 cysteine pairs are disulfide-bonded: Cys-341–Cys-356 and Cys-358–Cys-367. Asn-382 carries N-linked (GlcNAc...) asparagine glycosylation. Cysteines 396 and 405 form a disulfide. Asn-506, Asn-520, Asn-521, Asn-566, and Asn-573 each carry an N-linked (GlcNAc...) asparagine glycan. EGF-like domains follow at residues 566-602, 604-641, and 643-679; these read NITDDQENKSQHEAICEDEINRPRCSCSLSYIGRLCV, NVDYCLGNQSISVHGLCLALSHNCNCSDLQKYEGNICE, and DIEDCKSVSCKNGTTSIHLRGYFFYKCVPGFKGTRCE. Cystine bridges form between Cys-592–Cys-601 and Cys-608–Cys-620. Asn-611 and Asn-628 each carry an N-linked (GlcNAc...) asparagine glycan. An intrachain disulfide couples Cys-629 to Cys-640. N-linked (GlcNAc...) asparagine glycosylation is present at Asn-654. Disulfide bonds link Cys-669–Cys-678, Cys-685–Cys-696, Cys-690–Cys-705, and Cys-707–Cys-719. One can recognise an EGF-like 9; calcium-binding domain in the interval 681-720; the sequence is DLDECALHPCKSGATCIDQPGNYFCQCGPPFKVVDGFSCL. Residues 733–769 form the EGF-like 10 domain; it reads NIDNCILNAFEHNSTYKDLHLSYQCVCLSGWEGNFCE. A glycan (N-linked (GlcNAc...) asparagine) is linked at Asn-745. 34 cysteine pairs are disulfide-bonded: Cys-759/Cys-768, Cys-775/Cys-786, Cys-780/Cys-795, Cys-797/Cys-806, Cys-813/Cys-824, Cys-818/Cys-835, Cys-837/Cys-846, Cys-853/Cys-866, Cys-860/Cys-876, Cys-878/Cys-887, Cys-894/Cys-905, Cys-899/Cys-914, Cys-916/Cys-925, Cys-932/Cys-943, Cys-937/Cys-952, Cys-954/Cys-963, Cys-970/Cys-981, Cys-975/Cys-990, Cys-992/Cys-1001, Cys-1008/Cys-1019, Cys-1013/Cys-1028, Cys-1030/Cys-1039, Cys-1046/Cys-1056, Cys-1051/Cys-1065, Cys-1067/Cys-1076, Cys-1083/Cys-1094, Cys-1088/Cys-1103, Cys-1105/Cys-1114, Cys-1121/Cys-1137, Cys-1131/Cys-1147, Cys-1149/Cys-1158, Cys-1165/Cys-1176, Cys-1170/Cys-1185, and Cys-1187/Cys-1196. The region spanning 771–807 is the EGF-like 11; calcium-binding domain; the sequence is ESNECKMNPCKNNSTCTDLYKSYRCECTSGWTGQNCS. Asn-782, Asn-783, and Asn-805 each carry an N-linked (GlcNAc...) asparagine glycan. EGF-like domains follow at residues 809–847, 849–888, and 890–926; these read EINECDSDPCMNGGLCHESTIPGQFVCLCPPLYTGQFCH, RYNPCDLLNNPCRNNSTCLALVDGNQHCICREEFEGKHCE, and DVKECLFLSCQDYGDCEDMVNNFRCICRPGFSGSLCE. Asn-862 and Asn-863 each carry an N-linked (GlcNAc...) asparagine glycan. Residues 928-964 form the EGF-like 15; calcium-binding domain; it reads EINECSSEPCKNNGTCVDLTNRFFCNCEPGYHGPFCE. A glycan (N-linked (GlcNAc...) asparagine) is linked at Asn-940. The region spanning 966 to 1002 is the EGF-like 16 domain; the sequence is EVNKCKISPCLDEENCVYRTDRYNCLCAPGYTGINCE. The 37-residue stretch at 1004–1040 folds into the EGF-like 17; calcium-binding domain; the sequence is NLDECLSEPCLHDGVCIDGINHYTCDCKSGFFGTHCE. 3 consecutive EGF-like domains span residues 1042 to 1077, 1079 to 1115, and 1117 to 1159; these read NANDCLSNPCLHGRCTEPINEYPCSCDADGTSIQCK, KINDCTSMPCMNEGFCQKSAHGFTCICPRGYTGAYCE, and SIDN…QFCE. Positions 1161–1197 constitute an EGF-like 21; calcium-binding domain; sequence NINECSSSPCLHGANCEDHINGYVCKCQPGWSGHHCE. 4 N-linked (GlcNAc...) asparagine glycosylation sites follow: Asn-1509, Asn-1906, Asn-1941, and Asn-2033. Residues 1883 to 2063 form the Laminin G-like 1 domain; sequence FSCVCYYGDS…AVRNYHINNC (181 aa). Cystine bridges form between Cys-2037-Cys-2063, Cys-2103-Cys-2114, Cys-2108-Cys-2128, and Cys-2130-Cys-2139. Residues 2099–2140 form the EGF-like 22 domain; that stretch reads APSVCQEDVCHNGGTCRPIFLSSGIVSFQCDCPLHFTGRFCE. In terms of domain architecture, Laminin G-like 2 spans 2145–2339; the sequence is LFFPSFSGNS…NIENCHVPWC (195 aa). N-linked (GlcNAc...) asparagine glycans are attached at residues Asn-2170, Asn-2185, and Asn-2228. Intrachain disulfides connect Cys-2308–Cys-2339, Cys-2339–Cys-2350, Cys-2344–Cys-2359, Cys-2375–Cys-2386, Cys-2380–Cys-2396, and Cys-2398–Cys-2407. EGF-like domains follow at residues 2335–2368 and 2371–2408; these read HVPWCAHHLCRNNGTCLSDSENLFCECPRLYSGK and QFASCENNPCGNGATCVPKSGTDIICLCPYGRSGPLCT. Residue Asn-2347 is glycosylated (N-linked (GlcNAc...) asparagine). N-linked (GlcNAc...) asparagine glycosylation is found at Asn-2412, Asn-2453, Asn-2484, Asn-2506, and Asn-2532. The Laminin G-like 3 domain occupies 2419 to 2609; the sequence is SGTDAFGYTS…PNAGRSVGQC (191 aa). Intrachain disulfides connect Cys-2576–Cys-2609, Cys-2614–Cys-2625, and Cys-2619–Cys-2634. EGF-like domains lie at 2610–2646 and 2648–2689; these read HASPCSLMKCGNGGTCIESGTSVYCNCTTRWKGAFCT and TVSI…IYCE. N-linked (GlcNAc...) asparagine glycosylation occurs at Asn-2635. Disulfide bonds link Cys-2636–Cys-2645, Cys-2652–Cys-2668, Cys-2662–Cys-2677, and Cys-2679–Cys-2688. The Laminin G-like 4 domain occupies 2717 to 2895; sequence DPSFRSSELS…AKGGSNVGDC (179 aa). N-linked (GlcNAc...) asparagine glycosylation is found at Asn-2775, Asn-2800, and Asn-2824. 4 cysteine pairs are disulfide-bonded: Cys-2868–Cys-2895, Cys-2900–Cys-2911, Cys-2905–Cys-2920, and Cys-2922–Cys-2931. EGF-like domains follow at residues 2896–2932 and 2933–2970; these read DGTACGYNTCRNGGECRVNGTTFSCRCLPDWAGNICN and QSAYCLNNLCLHQSLCIPDQSFSYSCLCTLGWVGRYCE. Residue Asn-2914 is glycosylated (N-linked (GlcNAc...) asparagine). Asn-2932 is a glycosylation site (N-linked (GlcNAc...) asparagine). Cystine bridges form between Cys-2937–Cys-2948, Cys-2942–Cys-2958, and Cys-2960–Cys-2969. N-linked (GlcNAc...) asparagine glycans are attached at residues Asn-2971, Asn-3006, Asn-3036, Asn-3057, Asn-3073, and Asn-3082. Residues 2975 to 3165 form the Laminin G-like 5 domain; the sequence is FTTAKFMGNS…YDGDEQNEVT (191 aa).

It belongs to the EYS family. Expressed in retina (at protein level).

Its subcellular location is the cell projection. The protein localises to the cilium. It is found in the photoreceptor outer segment. It localises to the cytoplasm. The protein resides in the cytoskeleton. Its subcellular location is the cilium axoneme. The protein localises to the microtubule organizing center. It is found in the centrosome. It localises to the secreted. The protein resides in the extracellular space. Its subcellular location is the extracellular matrix. The protein localises to the interphotoreceptor matrix. Functionally, required to maintain the integrity of photoreceptor cells. Specifically required for normal morphology of the photoreceptor ciliary pocket, and might thus facilitate protein trafficking between the photoreceptor inner and outer segments via the transition zone. The polypeptide is Protein eyes shut homolog (Macaca fascicularis (Crab-eating macaque)).